Here is a 400-residue protein sequence, read N- to C-terminus: Imidazolonepropionase (400 aa).

Positions 70 and 72 each coordinate Fe(3+). Residues H70 and H72 each coordinate Zn(2+). The 4-imidazolone-5-propanoate site is built by R79, Y142, and H175. Y142 is an N-formimidoyl-L-glutamate binding site. H239 contributes to the Fe(3+) binding site. Position 239 (H239) interacts with Zn(2+). Q242 is a 4-imidazolone-5-propanoate binding site. A Fe(3+)-binding site is contributed by D314. D314 contacts Zn(2+). N-formimidoyl-L-glutamate contacts are provided by N316 and G318. T319 provides a ligand contact to 4-imidazolone-5-propanoate.

This sequence belongs to the metallo-dependent hydrolases superfamily. HutI family. Zn(2+) is required as a cofactor. It depends on Fe(3+) as a cofactor.

The protein resides in the cytoplasm. The catalysed reaction is 4-imidazolone-5-propanoate + H2O = N-formimidoyl-L-glutamate. Its pathway is amino-acid degradation; L-histidine degradation into L-glutamate; N-formimidoyl-L-glutamate from L-histidine: step 3/3. Its function is as follows. Catalyzes the hydrolytic cleavage of the carbon-nitrogen bond in imidazolone-5-propanoate to yield N-formimidoyl-L-glutamate. It is the third step in the universal histidine degradation pathway. This Methylobacterium nodulans (strain LMG 21967 / CNCM I-2342 / ORS 2060) protein is Imidazolonepropionase.